The following is a 373-amino-acid chain: D-alanine--D-alanine ligase (373 aa).

An ATP-grasp domain is found at 156–363 (KKLLAADGLP…YPTLLATMIE (208 aa)). ATP is bound at residue 184–239 (CERLGLPVFVKPARGGSSIGVSRVSSWDQLPAAVARARRHDPKVIVEAAISGRELE). Asp318, Glu330, and Asn332 together coordinate Mg(2+).

This sequence belongs to the D-alanine--D-alanine ligase family. Requires Mg(2+) as cofactor. It depends on Mn(2+) as a cofactor.

It is found in the cytoplasm. The enzyme catalyses 2 D-alanine + ATP = D-alanyl-D-alanine + ADP + phosphate + H(+). It participates in cell wall biogenesis; peptidoglycan biosynthesis. Its function is as follows. Cell wall formation. The sequence is that of D-alanine--D-alanine ligase from Mycobacterium tuberculosis (strain ATCC 25177 / H37Ra).